Consider the following 139-residue polypeptide: Large ribosomal subunit protein bL17 (139 aa).

It belongs to the bacterial ribosomal protein bL17 family. As to quaternary structure, part of the 50S ribosomal subunit. Contacts protein L32.

The sequence is that of Large ribosomal subunit protein bL17 from Afipia carboxidovorans (strain ATCC 49405 / DSM 1227 / KCTC 32145 / OM5) (Oligotropha carboxidovorans).